We begin with the raw amino-acid sequence, 250 residues long: Ribosomal RNA small subunit methyltransferase J (250 aa).

Residues 102-103 (RD), 118-119 (ER), 154-155 (SS), and Asp172 each bind S-adenosyl-L-methionine.

The protein belongs to the methyltransferase superfamily. RsmJ family.

It is found in the cytoplasm. It carries out the reaction guanosine(1516) in 16S rRNA + S-adenosyl-L-methionine = N(2)-methylguanosine(1516) in 16S rRNA + S-adenosyl-L-homocysteine + H(+). Specifically methylates the guanosine in position 1516 of 16S rRNA. This chain is Ribosomal RNA small subunit methyltransferase J, found in Edwardsiella ictaluri (strain 93-146).